The sequence spans 89 residues: Small ribosomal subunit protein uS17 (89 aa).

This sequence belongs to the universal ribosomal protein uS17 family. Part of the 30S ribosomal subunit.

Its function is as follows. One of the primary rRNA binding proteins, it binds specifically to the 5'-end of 16S ribosomal RNA. The sequence is that of Small ribosomal subunit protein uS17 from Novosphingobium aromaticivorans (strain ATCC 700278 / DSM 12444 / CCUG 56034 / CIP 105152 / NBRC 16084 / F199).